The sequence spans 699 residues: Cyclic AMP-dependent transcription factor ATF-6 beta (699 aa).

Position 2 is an N-acetylalanine (alanine 2). Residues 2–393 (AELMLLSEIA…GLKLGSGNRK (392 aa)) lie on the Cytoplasmic side of the membrane. 3 disordered regions span residues 59 to 114 (SLDV…QVPG), 218 to 246 (VQIS…PKPV), and 290 to 313 (EGPA…PGNS). Positions 68–78 (PPEPPWDPLPI) are enriched in pro residues. Residues 86–109 (SEPSSPCSSSSLSSESSHLSTEPP) show a composition bias toward low complexity. The 64-residue stretch at 322 to 385 (LLKRQQRMIK…EALLAENSGL (64 aa)) folds into the bZIP domain. Residues 324–344 (KRQQRMIKNRESACQSRRKKK) are basic motif. The interval 347–354 (LQGLEARL) is leucine-zipper. A helical; Signal-anchor for type II membrane protein membrane pass occupies residues 394 to 414 (VVCIMVFLLFIAFNFGPVSIS). Topologically, residues 415–699 (EPPPAPMSPR…ASQPLYLNHP (285 aa)) are lumenal. The disordered stretch occupies residues 417-474 (PPAPMSPRMSREEPRPQRHLLGFSEPGPAHGMEPLREAAQSPGEQQPSSAGRPSFRNL). Polar residues predominate over residues 458–467 (PGEQQPSSAG). Residues asparagine 473 and asparagine 502 are each glycosylated (N-linked (GlcNAc...) asparagine). The segment covering 519-529 (RHQRGRRKIPH) has biased composition (basic residues). The tract at residues 519-563 (RHQRGRRKIPHRAQERQKSQLRKKSPPVKPVPTQPPGPPERDPVG) is disordered. The segment covering 545–556 (PVKPVPTQPPGP) has biased composition (pro residues). Asparagine 607, asparagine 624, and asparagine 673 each carry an N-linked (GlcNAc...) asparagine glycan. The interval 657–699 (STVPPSLRKQPSPSPGNTTGGPLPGSAASPAHQASQPLYLNHP) is disordered. A compositionally biased stretch (low complexity) spans 680–693 (PGSAASPAHQASQP).

Belongs to the bZIP family. ATF subfamily. As to quaternary structure, homodimer and heterodimer with ATF6-alpha. The dimer interacts with the nuclear transcription factor Y (NF-Y) trimer through direct binding to NF-Y subunit C (NF-YC). Post-translationally, N-glycosylated. In terms of processing, during unfolded protein response, a fragment of approximately 60 kDa containing the cytoplasmic transcription factor domain is released by proteolysis. The cleavage is probably performed sequentially by site-1 (MBTPS1, S1P) and site-2 (MBTPS2, S2P) proteases.

The protein localises to the endoplasmic reticulum membrane. It localises to the nucleus. Functionally, precursor of the transcription factor form (Processed cyclic AMP-dependent transcription factor ATF-6 beta), which is embedded in the endoplasmic reticulum membrane. Endoplasmic reticulum stress promotes processing of this form, releasing the transcription factor form that translocates into the nucleus, where it activates transcription of genes involved in the unfolded protein response (UPR). In terms of biological role, transcription factor that acts in the unfolded protein response (UPR) pathway by activating UPR target genes induced during ER stress. Binds DNA on the 5'-CCAC[GA]-3' half of the ER stress response element (ERSE) (5'-CCAATN(9)CCAC[GA]-3') when NF-Y is bound to ERSE. This is Cyclic AMP-dependent transcription factor ATF-6 beta (Atf6b) from Mus musculus (Mouse).